Consider the following 558-residue polypeptide: DALR anticodon-binding domain-containing protein 3 (558 aa).

The disordered stretch occupies residues 213–240; that stretch reads KALENSAYRDRETEKGKRRSRGEEIEGE.

The polypeptide is DALR anticodon-binding domain-containing protein 3 (dalrd3) (Danio rerio (Zebrafish)).